Consider the following 239-residue polypeptide: MATKSNEENIAEFKGHNEIQIELMKEECIVVDNDDKPIRPGSKKETHLMVNINNGLLHRAFSIFLFNGEGKLLLQQRALEKITFPGYWTNTVCSHPLWIVGSELVEENAQGVKIAAKRKLNHELGVPLDQVNIDDFTFMTKIHYKSESKEDPQWGEHEIDHILIMQKDGITINAEPNEVMDYKYVSQEELDQLFKDEDEGKVKVTPWFRLIALNHLKPWWNNLNNLKPLVEPTNTIHRY.

K43 provides a ligand contact to substrate. H47 and H58 together coordinate Mg(2+). The Nudix hydrolase domain maps to 56 to 210; it reads LLHRAFSIFL…KVKVTPWFRL (155 aa). 2 residues coordinate substrate: R77 and K81. The active site involves C93. S94 is a substrate binding site. Mg(2+) contacts are provided by E156 and E158. The active site involves E158.

The protein belongs to the IPP isomerase type 1 family. Mg(2+) serves as cofactor.

It carries out the reaction isopentenyl diphosphate = dimethylallyl diphosphate. It functions in the pathway isoprenoid biosynthesis; dimethylallyl diphosphate biosynthesis; dimethylallyl diphosphate from isopentenyl diphosphate: step 1/1. Catalyzes the 1,3-allylic rearrangement of the homoallylic substrate isopentenyl (IPP) to its highly electrophilic allylic isomer, dimethylallyl diphosphate (DMAPP). The chain is Isopentenyl-diphosphate Delta-isomerase (ipi) from Dictyostelium discoideum (Social amoeba).